The chain runs to 411 residues: Putative nickel insertion protein (411 aa).

This sequence belongs to the LarC family.

This Acaryochloris marina (strain MBIC 11017) protein is Putative nickel insertion protein.